A 486-amino-acid chain; its full sequence is MNAPESVQAKPRKRYDAGVMKYKEMGYWDGDYEPKDTDLLALFRITPQDGVDPVEAAAAVAGESSTATWTVVWTDRLTACDMYRAKAYRVDPVPNNPEQFFCYVAYDLSLFEEGSIANLTASIIGNVFSFKPIKAARLEDMRFPVAYVKTFAGPSTGIIVERERLDKFGRPLLGATTKPKLGLSGRNYGRVVYEGLKGGLDFMKDDENINSQPFMHWRDRFLFVMDAVNKASAATGEVKGSYLNVTAGTMEEMYRRAEFAKSLGSVIIMIDLIVGWTCIQSMSNWCRQNDMILHLHRAGHGTYTRQKNHGVSFRVIAKWLRLAGVDHMHTGTAVGKLEGDPLTVQGYYNVCRDAYTHADLSRGLFFDQDWASLRKVMPVASGGIHAGQMHQLISLFGDDVVLQFGGGTIGHPQGIQAGATANRVALEAMVLARNEGRDILNEGPEILRDAARWCGPLRAALDTWGDISFNYTPTDTSDFAPTASVA.

Positions 126 and 176 each coordinate substrate. K178 functions as the Proton acceptor in the catalytic mechanism. K180 lines the substrate pocket. Residues K204, D206, and E207 each contribute to the Mg(2+) site. K204 is subject to N6-carboxylysine. H296 (proton acceptor) is an active-site residue. Residues R297, H329, and S381 each contribute to the substrate site.

Belongs to the RuBisCO large chain family. Type I subfamily. In terms of assembly, heterohexadecamer of 8 large chains and 8 small chains; disulfide-linked. The disulfide link is formed within the large subunit homodimers. It depends on Mg(2+) as a cofactor. The disulfide bond which can form between Cys-278 in the large chain dimeric partners within the hexadecamer appears to be associated with oxidative stress and protein turnover.

It catalyses the reaction 2 (2R)-3-phosphoglycerate + 2 H(+) = D-ribulose 1,5-bisphosphate + CO2 + H2O. The enzyme catalyses D-ribulose 1,5-bisphosphate + O2 = 2-phosphoglycolate + (2R)-3-phosphoglycerate + 2 H(+). Its function is as follows. RuBisCO catalyzes two reactions: the carboxylation of D-ribulose 1,5-bisphosphate, the primary event in carbon dioxide fixation, as well as the oxidative fragmentation of the pentose substrate. Both reactions occur simultaneously and in competition at the same active site. This is Ribulose bisphosphate carboxylase large chain, chromosomal (cbbL1) from Cupriavidus necator (strain ATCC 17699 / DSM 428 / KCTC 22496 / NCIMB 10442 / H16 / Stanier 337) (Ralstonia eutropha).